A 261-amino-acid polypeptide reads, in one-letter code: DNA oxidative demethylase ALKBH2 (261 aa).

Residues 1–57 (MDRFLVKGAQGGLLRKQEEQEPTGEEPAVLGGDKESTRKRPRREAPGNGGHSAGPSW) form a disordered region. Positions 3-7 (RFLVK) match the PCNA-binding motif. Substrate-binding positions include 102–104 (FGK) and 122–124 (YTF). One can recognise a Fe2OG dioxygenase domain in the interval 152–257 (TFNFVLINRY…RVNLTFRKIL (106 aa)). Residues Asn159, Tyr161, and His171 each contribute to the 2-oxoglutarate site. Fe cation contacts are provided by His171 and Asp173. Position 174 (Asp174) interacts with substrate. Residues His236, Arg248, Thr252, and Arg254 each contribute to the 2-oxoglutarate site. His236 provides a ligand contact to Fe cation.

It belongs to the alkB family. Interacts with PCNA homotrimer; this interaction is enhanced during the S-phase of the cell cycle. Interacts with nucleolar proteins NCL, UBTF and NPM1. Interacts with XRCC5-XRCC6 heterodimer. Fe(2+) serves as cofactor. As to expression, detected in colon, small intestine, ovary, testis, prostate, skeletal muscle, heart, liver and urinary bladder.

It is found in the nucleus. It localises to the nucleolus. The protein resides in the nucleoplasm. It catalyses the reaction a methylated nucleobase within DNA + 2-oxoglutarate + O2 = a nucleobase within DNA + formaldehyde + succinate + CO2. The enzyme catalyses an N(1)-methyl-2'-deoxyadenosine in double-stranded DNA + 2-oxoglutarate + O2 = a 2'-deoxyadenosine in double-stranded DNA + formaldehyde + succinate + CO2 + H(+). The catalysed reaction is an N(1)-methyl-2'-deoxyadenosine in single-stranded DNA + 2-oxoglutarate + O2 = a 2'-deoxyadenosine in single-stranded DNA + formaldehyde + succinate + CO2 + H(+). It carries out the reaction an N(3)-methyl-2'-deoxycytidine in double-stranded DNA + 2-oxoglutarate + O2 = a 2'-deoxycytidine in double-stranded DNA + formaldehyde + succinate + CO2 + H(+). It catalyses the reaction an N(3)-methyl-2'-deoxycytidine in single-stranded DNA + 2-oxoglutarate + O2 = a 2'-deoxycytidine in single-stranded DNA + formaldehyde + succinate + CO2 + H(+). The enzyme catalyses a 1,N(6)-etheno-2'-deoxyadenosine in double-stranded DNA + 2-oxoglutarate + O2 + H2O = a 2'-deoxyadenosine in double-stranded DNA + glyoxal + succinate + CO2. The catalysed reaction is a 1,N(6)-etheno-2'-deoxyadenosine in single-stranded DNA + 2-oxoglutarate + O2 + H2O = a 2'-deoxyadenosine in single-stranded DNA + glyoxal + succinate + CO2. It carries out the reaction a 3,N(4)-etheno-2'-deoxycytidine in double-stranded DNA + 2-oxoglutarate + O2 + H2O = a 2'-deoxycytidine in double-stranded DNA + glyoxal + succinate + CO2. It catalyses the reaction a 3,N(4)-etheno-2'-deoxycytidine in single-stranded DNA + 2-oxoglutarate + O2 + H2O = a 2'-deoxycytidine in single-stranded DNA + glyoxal + succinate + CO2. The enzyme catalyses a 1,N(2)-etheno-2'-deoxyguanosine in double-stranded DNA + 2-oxoglutarate + O2 + H2O = a 2'-deoxyguanosine in double-stranded DNA + glyoxal + succinate + CO2. Its activity is regulated as follows. Activated by ascorbate and magnesium ions. Functionally, dioxygenase that repairs alkylated nucleic acid bases by direct reversal oxidative dealkylation. Can process both double-stranded (ds) and single-stranded (ss) DNA substrates, with a strong preference for dsDNA. Uses molecular oxygen, 2-oxoglutarate and iron as cofactors to oxidize the alkyl groups that are subsequently released as aldehydes, regenerating the undamaged bases. Probes the base pair stability, locates a weakened base pair and flips the damaged base to accommodate the lesion in its active site for efficient catalysis. Repairs monoalkylated bases, specifically N1-methyladenine and N3-methylcytosine, as well as higher order alkyl adducts such as bases modified with exocyclic bridged adducts known as etheno adducts including 1,N6-ethenoadenine, 3,N4-ethenocytosine and 1,N2-ethenoguanine. Acts as a gatekeeper of genomic integrity under alkylation stress. Efficiently repairs alkylated lesions in ribosomal DNA (rDNA). These lesions can cause ss- and dsDNA strand breaks that severely impair rDNA transcription. In a response mechanism to DNA damage, associates with PCNA at replication forks to repair alkylated adducts prior to replication. The polypeptide is DNA oxidative demethylase ALKBH2 (ALKBH2) (Homo sapiens (Human)).